The chain runs to 257 residues: uncharacterized protein (257 aa).

The next 6 helical transmembrane spans lie at 5 to 25 (FLYF…IVTF), 29 to 49 (LALV…GTLI), 53 to 73 (TLSF…GDWI), 146 to 166 (LGCI…GIAI), 180 to 200 (IQFL…WKLW), and 216 to 236 (VNLC…MIYI).

It belongs to the DedA family.

It localises to the cell membrane. This is an uncharacterized protein from Buchnera aphidicola subsp. Baizongia pistaciae (strain Bp).